Here is a 289-residue protein sequence, read N- to C-terminus: Pyridoxal kinase PdxY (289 aa).

Residues serine 9 and 44 to 45 (TQ) each bind substrate. ATP-binding positions include aspartate 112, alanine 144, glutamate 149, lysine 183, and 210 to 213 (RPLV). Aspartate 225 serves as a coordination point for substrate.

It belongs to the pyridoxine kinase family. PdxY subfamily. As to quaternary structure, homodimer. Mg(2+) serves as cofactor.

The catalysed reaction is pyridoxal + ATP = pyridoxal 5'-phosphate + ADP + H(+). It participates in cofactor metabolism; pyridoxal 5'-phosphate salvage; pyridoxal 5'-phosphate from pyridoxal: step 1/1. Functionally, pyridoxal kinase involved in the salvage pathway of pyridoxal 5'-phosphate (PLP). Catalyzes the phosphorylation of pyridoxal to PLP. The sequence is that of Pyridoxal kinase PdxY from Proteus mirabilis.